The chain runs to 163 residues: IQ domain-containing protein F2 (163 aa).

IQ domains lie at 42–71 (RVIAAKKIQAWWRGTLVRRTLLHAALSTWI) and 98–127 (RERAVVKLQSLVRMWRIHWRYCQVLNAIYV).

The sequence is that of IQ domain-containing protein F2 (IQCF2) from Bos taurus (Bovine).